Consider the following 467-residue polypeptide: Histone acetyltransferase type B catalytic subunit (467 aa).

The tract at residues 1-24 is disordered; it reads MVQKQQASAGPGTEPKKRRRVGFS. Acetyl-CoA-binding positions include 249–251 and 256–262; these read ILV and QGKGLGS. Glutamate 283 serves as the catalytic Proton donor/acceptor.

This sequence belongs to the HAT1 family.

It localises to the nucleus. It is found in the cytoplasm. It carries out the reaction L-lysyl-[protein] + acetyl-CoA = N(6)-acetyl-L-lysyl-[protein] + CoA + H(+). In terms of biological role, acetylates soluble but not nucleosomal H4. Acetylates 'Lys-12' of histone H4. This is Histone acetyltransferase type B catalytic subunit (HAG2) from Arabidopsis thaliana (Mouse-ear cress).